The sequence spans 102 residues: Citrate lyase acyl carrier protein (102 aa).

An O-(phosphoribosyl dephospho-coenzyme A)serine modification is found at serine 14.

This sequence belongs to the CitD family. As to quaternary structure, oligomer with a subunit composition of (alpha,beta,gamma)6.

Its subcellular location is the cytoplasm. Functionally, covalent carrier of the coenzyme of citrate lyase. This is Citrate lyase acyl carrier protein from Streptococcus mutans serotype c (strain ATCC 700610 / UA159).